A 416-amino-acid polypeptide reads, in one-letter code: WD repeat-containing protein JIP5 (416 aa).

3 WD repeats span residues P9–K48, R62–K101, and G112–S151. The disordered stretch occupies residues E149–K183. Over residues S166–S179 the composition is skewed to low complexity. 3 WD repeats span residues I214–E255, D264–L308, and S309–N348. 2 stretches are compositionally biased toward acidic residues: residues S343–N359 and S374–D383. Positions S343 to D416 are disordered. Positions K389–G400 are enriched in basic residues.

It belongs to the WD repeat WDR55 family.

It localises to the nucleus. The protein resides in the nucleolus. This Coccidioides immitis (strain RS) (Valley fever fungus) protein is WD repeat-containing protein JIP5 (JIP5).